The sequence spans 220 residues: Probable septum site-determining protein MinC (220 aa).

This sequence belongs to the MinC family. In terms of assembly, interacts with MinD and FtsZ.

Its function is as follows. Cell division inhibitor that blocks the formation of polar Z ring septums. Rapidly oscillates between the poles of the cell to destabilize FtsZ filaments that have formed before they mature into polar Z rings. Prevents FtsZ polymerization. The chain is Probable septum site-determining protein MinC from Vibrio campbellii (strain ATCC BAA-1116).